Consider the following 361-residue polypeptide: Uroporphyrinogen decarboxylase (361 aa).

Substrate is bound by residues 44–48, aspartate 93, tyrosine 168, serine 223, and histidine 337; that span reads RQAGR.

This sequence belongs to the uroporphyrinogen decarboxylase family. Homodimer.

The protein resides in the cytoplasm. The catalysed reaction is uroporphyrinogen III + 4 H(+) = coproporphyrinogen III + 4 CO2. It functions in the pathway porphyrin-containing compound metabolism; protoporphyrin-IX biosynthesis; coproporphyrinogen-III from 5-aminolevulinate: step 4/4. Its function is as follows. Catalyzes the decarboxylation of four acetate groups of uroporphyrinogen-III to yield coproporphyrinogen-III. This Thermobifida fusca (strain YX) protein is Uroporphyrinogen decarboxylase.